The chain runs to 2325 residues: Otogelin-like protein (2325 aa).

Residues 1 to 22 (MVPWRALSLPILLVSLRGYVCA) form the signal peptide. One can recognise a VWFD 1 domain in the interval 112 to 288 (GICKTWGQYH…VLTPDDTKCV (177 aa)). 2 cysteine pairs are disulfide-bonded: Cys-114–Cys-248 and Cys-136–Cys-287. N-linked (GlcNAc...) asparagine glycosylation occurs at Asn-425. Positions 472–645 (VQCSVVGDSH…HAWRVSSTCF (174 aa)) constitute a VWFD 2 domain. 3 disulfide bridges follow: Cys-474–Cys-609, Cys-496–Cys-644, and Cys-518–Cys-526. The TIL 1 domain maps to 736-791 (CQKGMLYHHCSSLCLRSCTSLSSPEQCKDDCAEGCNCPEGKFYEETLNFCVPIYHC). Asn-817 and Asn-867 each carry an N-linked (GlcNAc...) asparagine glycan. One can recognise a VWFD 3 domain in the interval 937 to 1114 (AVCTVYGDRH…DLMEALKPCE (178 aa)). 3 cysteine pairs are disulfide-bonded: Cys-939–Cys-1069, Cys-961–Cys-1113, and Cys-983–Cys-990. Asn-1280 carries an N-linked (GlcNAc...) asparagine glycan. The region spanning 1366–1418 (RYEPCATPCFKTCSDPEALACTFLPPVEGCLPYCPKNMILDETTLKCVHPEDC) is the TIL 2 domain. In terms of domain architecture, VWFD 4 spans 1506–1695 (CRCSMLSELS…SWEIEKSFEV (190 aa)). 2 disulfides stabilise this stretch: Cys-1508-Cys-1655 and Cys-1549-Cys-1571. Asn-1576 and Asn-2170 each carry an N-linked (GlcNAc...) asparagine glycan. 4 disulfides stabilise this stretch: Cys-2233/Cys-2289, Cys-2254/Cys-2303, Cys-2265/Cys-2320, and Cys-2269/Cys-2322. In terms of domain architecture, CTCK spans 2233–2325 (CKREERICQK…EPIDCTCQWN (93 aa)). Residue Asn-2296 is glycosylated (N-linked (GlcNAc...) asparagine).

It belongs to the otogelin family.

It is found in the secreted. This is Otogelin-like protein (Otogl) from Mus musculus (Mouse).